A 554-amino-acid polypeptide reads, in one-letter code: Methyl-CpG-binding domain protein 4 (554 aa).

Residues M1 to D23 form a disordered region. One can recognise an MBD domain in the interval S63–K135. A compositionally biased stretch (polar residues) spans Q154–N164. Disordered regions lie at residues Q154–N195 and D209–A252. Residues L178–N195 are compositionally biased toward low complexity. S296 and S402 each carry phosphoserine. D534 is an active-site residue.

As to quaternary structure, interacts with MLH1.

Its subcellular location is the nucleus. Its function is as follows. Mismatch-specific DNA N-glycosylase involved in DNA repair. Has thymine glycosylase activity and is specific for G:T mismatches within methylated and unmethylated CpG sites. Can also remove uracil or 5-fluorouracil in G:U mismatches. Has no lyase activity. Was first identified as methyl-CpG-binding protein. The polypeptide is Methyl-CpG-binding domain protein 4 (Mbd4) (Mus musculus (Mouse)).